A 187-amino-acid polypeptide reads, in one-letter code: Oligoribonuclease (187 aa).

Positions Leu7–Met170 constitute an Exonuclease domain. Residue Tyr128 is part of the active site.

The protein belongs to the oligoribonuclease family.

It localises to the cytoplasm. 3'-to-5' exoribonuclease specific for small oligoribonucleotides. The chain is Oligoribonuclease from Neisseria meningitidis serogroup A / serotype 4A (strain DSM 15465 / Z2491).